A 198-amino-acid polypeptide reads, in one-letter code: Recombination protein RecR (198 aa).

Residues 57 to 72 (CSSCGHITDKDPCYIC) form a C4-type zinc finger. Positions 80–175 (SIICVVQDPK…KITRIAHGLP (96 aa)) constitute a Toprim domain.

The protein belongs to the RecR family.

May play a role in DNA repair. It seems to be involved in an RecBC-independent recombinational process of DNA repair. It may act with RecF and RecO. The protein is Recombination protein RecR of Anoxybacillus flavithermus (strain DSM 21510 / WK1).